Here is an 89-residue protein sequence, read N- to C-terminus: Small ribosomal subunit protein uS14 (89 aa).

It belongs to the universal ribosomal protein uS14 family. In terms of assembly, part of the 30S ribosomal subunit. Contacts proteins S3 and S10.

Binds 16S rRNA, required for the assembly of 30S particles and may also be responsible for determining the conformation of the 16S rRNA at the A site. This Chloroherpeton thalassium (strain ATCC 35110 / GB-78) protein is Small ribosomal subunit protein uS14.